The following is a 121-amino-acid chain: Acid shock protein (121 aa).

An N-terminal signal peptide occupies residues 1 to 21; sequence MKKVLALMVAATLGLSSVAFA. A propeptide spanning residues 22–63 is cleaved from the precursor; the sequence is ADTTATATPAATSTTATVAAQTKATQHQKHKVTKKTTEQKAQ. Positions 40–121 are disordered; that stretch reads AAQTKATQHQ…AKKPVAAPAA (82 aa). Positions 74-83 are enriched in low complexity; it reads VQKAPVQKAQ. Residues 84–93 show a composition bias toward basic residues; the sequence is AAKKHVKKAS. Residues 94-103 are compositionally biased toward low complexity; it reads VQKAPVQKAQ. Residues 104–113 show a composition bias toward basic residues; it reads AAKKHHKTAK.

It belongs to the Asr family. In terms of processing, proteolytic processing gives rise to the active protein.

The protein localises to the periplasm. Functionally, required for growth and/or survival at acidic conditions. The sequence is that of Acid shock protein from Yersinia pseudotuberculosis serotype O:1b (strain IP 31758).